The chain runs to 662 residues: Protein Aster-C (662 aa).

Positions 1-34 (MEGAPTVRQVMNEGDSSLATDLQEDVEENPSPTV) are disordered. The GRAM domain maps to 69-136 (EEYRRQFTHL…KNITFMTKEK (68 aa)). 2 disordered regions span residues 212–237 (SIEDVQPRSPGRSSLDDSGERDEKLS) and 249–284 (RVSETESFDGNSSKGGLGKEESQNEKQTKKSLLPTL). The segment covering 265 to 276 (LGKEESQNEKQT) has biased composition (basic and acidic residues). The VASt domain occupies 326–497 (HGRLFINRIF…DLLIEESVLN (172 aa)). A helical membrane pass occupies residues 557 to 577 (LIVVMSIFVLLLVLLNVTLFL).

It is found in the endoplasmic reticulum membrane. The protein localises to the cell membrane. Cholesterol transporter that mediates non-vesicular transport of cholesterol from the plasma membrane (PM) to the endoplasmic reticulum (ER). Contains unique domains for binding cholesterol and the PM, thereby serving as a molecular bridge for the transfer of cholesterol from the PM to the ER. Plays a crucial role in cholesterol homeostasis and has the unique ability to localize to the PM based on the level of membrane cholesterol. In lipid-poor conditions localizes to the ER membrane and in response to excess cholesterol in the PM is recruited to the endoplasmic reticulum-plasma membrane contact sites (EPCS) which is mediated by the GRAM domain. At the EPCS, the sterol-binding VASt/ASTER domain binds to the cholesterol in the PM and facilitates its transfer from the PM to ER. In Homo sapiens (Human), this protein is Protein Aster-C (GRAMD1C).